The chain runs to 289 residues: Bis(5'-nucleosyl)-tetraphosphatase, symmetrical (289 aa).

Belongs to the Ap4A hydrolase family.

The catalysed reaction is P(1),P(4)-bis(5'-adenosyl) tetraphosphate + H2O = 2 ADP + 2 H(+). Functionally, hydrolyzes diadenosine 5',5'''-P1,P4-tetraphosphate to yield ADP. This is Bis(5'-nucleosyl)-tetraphosphatase, symmetrical from Yersinia pestis bv. Antiqua (strain Antiqua).